Reading from the N-terminus, the 216-residue chain is uncharacterized protein (216 aa).

This is an uncharacterized protein from Caenorhabditis elegans.